Consider the following 353-residue polypeptide: Hydrazine synthase subunit gamma (353 aa).

The first 39 residues, 1 to 39 (MAREMRLGGKERMKTGVVKIGLVAALGVVGLISAGGVYA), serve as a signal peptide directing secretion. Cys-102, Cys-105, and His-106 together coordinate heme c. Residues Asp-118, Leu-119, Glu-122, Gly-123, Ser-126, Asn-129, Leu-139, and Pro-141 each coordinate Ca(2+). Heme c contacts are provided by Cys-165, Cys-225, Cys-228, and His-229. A Cytochrome c domain is found at 209-353 (EAQKRGQKIF…QDLVEYLKAL (145 aa)). Ca(2+)-binding residues include Asp-296, Ser-306, Gly-307, and Thr-308. His-332 provides a ligand contact to heme c.

As to quaternary structure, part of the hydrazine synthase complex that forms an elongated dimer of heterotrimers composed of one alpha, one beta and one gamma subunit. Heme c serves as cofactor.

The protein localises to the anammoxosome. It carries out the reaction hydrazine + 3 Fe(III)-[cytochrome c] + H2O = nitric oxide + 3 Fe(II)-[cytochrome c] + NH4(+) + 2 H(+). Its pathway is nitrogen metabolism. In terms of biological role, component of the hydrazine synthase complex that catalyzes the condensation of nitric oxide (NO) with ammonium to form hydrazine. The gamma subunit catalyzes the first half-reaction, i.e. the three-electron reduction of nitric oxide to hydroxylamine; it may obtain electrons from the triheme cytochrome c kuste2854. Is involved in anaerobic ammonium oxidation (anammox), a biological process in which nitrite is used as the electron acceptor in the conversion of ammonium to dinitrogen gas (N2) and water; this bacterial process has a major role in the Earth's nitrogen cycle and has been estimated to synthesize up to 50% of the dinitrogen gas emitted into our atmosphere from the oceans. The protein is Hydrazine synthase subunit gamma of Kuenenia stuttgartiensis.